The primary structure comprises 65 residues: Conotoxin Lt5.1 (65 aa).

An N-terminal signal peptide occupies residues 1 to 19; sequence MRCLPVFIILLLLIPSAPS. Residues 20-48 constitute a propeptide that is removed on maturation; it reads VDAQRKTKDDVPLASFHDNAKRTLKRLWN.

Belongs to the conotoxin T superfamily. Post-translationally, contains 2 disulfide bonds that can be either 'C1-C3, C2-C4' or 'C1-C4, C2-C3', since these disulfide connectivities have been observed for conotoxins with cysteine framework V (for examples, see AC P0DQQ7 and AC P81755). As to expression, expressed by the venom duct.

The protein localises to the secreted. The polypeptide is Conotoxin Lt5.1 (Conus litteratus (Lettered cone)).